We begin with the raw amino-acid sequence, 385 residues long: Glucans biosynthesis protein C (385 aa).

The next 10 membrane-spanning stretches (helical) occupy residues 17–37 (AWLM…SHTW), 60–80 (MQVF…RYPL), 91–111 (VGIP…IMLQ), 137–157 (ISHL…VWIF), 173–193 (KFSM…YAVI), 212–232 (FIVM…LAFI), 239–259 (LFTT…VAYL), 274–294 (TESV…FSFG), 311–331 (ASLF…AYIT), and 338–358 (WLGF…LYEI).

It belongs to the acyltransferase 3 family. OpgC subfamily.

Its subcellular location is the cell membrane. The protein operates within glycan metabolism; osmoregulated periplasmic glucan (OPG) biosynthesis. Its function is as follows. Necessary for the succinyl substitution of periplasmic glucans. Could catalyze the transfer of succinyl residues from the cytoplasmic side of the membrane to the nascent glucan backbones on the periplasmic side of the membrane. This chain is Glucans biosynthesis protein C, found in Escherichia coli O45:K1 (strain S88 / ExPEC).